Here is a 231-residue protein sequence, read N- to C-terminus: Septum site-determining protein MinC (231 aa).

Belongs to the MinC family. In terms of assembly, interacts with MinD and FtsZ.

In terms of biological role, cell division inhibitor that blocks the formation of polar Z ring septums. Rapidly oscillates between the poles of the cell to destabilize FtsZ filaments that have formed before they mature into polar Z rings. Prevents FtsZ polymerization. The protein is Septum site-determining protein MinC of Shigella flexneri.